Consider the following 661-residue polypeptide: MEMTEMTGVSLKRGALVVEDNDSGVPVEETKKQKLSECSLTKGQDGLQNDFLSISEDVPRPPDTVSTGKGGKNSEAQLEDEEEEEEDGLSEECEEEESESFADMMKHGLTEADVGITKFVSSHQGFSGILKERYSDFVVHEIGKDGRISHLNDLSIPVDEEDPSEDIFTVLTAEEKQRLEELQLFKNKETSVAIEVIEDTKEKRTIIHQAIKSLFPGLETKTEDREGKKYIVAYHAAGKKALANPRKHSWPKSRGSYCHFVLYKENKDTMDAINVLSKYLRVKPNIFSYMGTKDKRAITVQEIAVLKITAQRLAHLNKCLMNFKLGNFSYQKNPLKLGELQGNHFTVVLRNITGTDDQVQQAMNSLKEIGFINYYGMQRFGTTAVPTYQVGRAILQNSWTEVMDLILKPRSGAEKGYLVKCREEWAKTKDPTAALRKLPVKRCVEGQLLRGLSKYGMKNIVSAFGIIPRNNRLMYIHSYQSYVWNNMVSKRIEDYGLKPVPGDLVLKGATATYIEEDDVNNYSIHDVVMPLPGFDVIYPKHKIQEAYREMLTADNLDIDNMRHKIRDYSLSGAYRKIIIRPQNVSWEVVAYDDPKIPLFNTDVDNLEGKTPPVFASEGKYRALKMDFSLPPSTYATMAIREVLKMDTSIKNQTQLNTTWLR.

Position 1 is an N-acetylmethionine (M1). A disordered region spans residues 1–97 (MEMTEMTGVS…GLSEECEEEE (97 aa)). S10 carries the post-translational modification Phosphoserine. Polar residues predominate over residues 36-52 (SECSLTKGQDGLQNDFL). Acidic residues predominate over residues 77–97 (QLEDEEEEEEDGLSEECEEEE). Position 127 is a phosphoserine (S127). D294 acts as the Nucleophile in catalysis. The region spanning 370–580 (GFINYYGMQR…SGAYRKIIIR (211 aa)) is the TRUD domain. Phosphothreonine is present on T610.

Belongs to the pseudouridine synthase TruD family. Interacts with SIRT1.

Its subcellular location is the nucleus. It carries out the reaction a uridine in tRNA = a pseudouridine in tRNA. It catalyses the reaction uridine(13) in tRNA = pseudouridine(13) in tRNA. The catalysed reaction is a uridine in mRNA = a pseudouridine in mRNA. Its function is as follows. Pseudouridylate synthase that catalyzes pseudouridylation of RNAs. Acts as a regulator of protein synthesis in embryonic stem cells by mediating pseudouridylation of RNA fragments derived from tRNAs (tRFs): pseudouridylated tRFs inhibit translation by targeting the translation initiation complex. Also catalyzes pseudouridylation of mRNAs: mediates pseudouridylation of mRNAs with the consensus sequence 5'-UGUAG-3'. Acts as a regulator of pre-mRNA splicing by mediating pseudouridylation of pre-mRNAs at locations associated with alternatively spliced regions. Pseudouridylation of pre-mRNAs near splice sites directly regulates mRNA splicing and mRNA 3'-end processing. In addition to mRNAs and tRNAs, binds other types of RNAs, such as snRNAs, Y RNAs and vault RNAs, suggesting that it can catalyze pseudouridylation of many RNA types. The chain is Pseudouridylate synthase 7 homolog from Homo sapiens (Human).